Consider the following 87-residue polypeptide: Omega-lycotoxin-Am1b (87 aa).

The first 17 residues, 1 to 17 (MKLSIFFVLFFIAIAYC), serve as a signal peptide directing secretion. A propeptide spanning residues 18 to 40 (QPEFLDDEEDEVEETLPVAEEGR) is cleaved from the precursor. Cystine bridges form between Cys-44–Cys-59, Cys-51–Cys-64, Cys-58–Cys-84, and Cys-66–Cys-82.

Belongs to the neurotoxin omega-lctx family. Expressed by the venom gland.

The protein resides in the secreted. Modulates Cav2.1/CACNA1A voltage-gated calcium channels (P/Q-type currents) in rat cerebellar Purkinje cells and hippocampal CA1-CA3 neurons. At saturating concentrations (&gt;10 nM) decelerates activation kinetics and slightly increases peak amplitude without affecting deactivation kinetics. In vivo, does not cause death when intravenously injected into mice. In rat models, through its activity on Cav2.1/CACNA1A, has an ameliorative effect on memory defects provoked by hyperstimulation of N-methyl-D-aspartate receptors (NMDARs) in the hippocampus. This chain is Omega-lycotoxin-Am1b, found in Alopecosa marikovskyi (Wolf spider).